We begin with the raw amino-acid sequence, 259 residues long: Electron transfer flavoprotein subunit beta (259 aa).

This sequence belongs to the ETF beta-subunit/FixA family. In terms of assembly, heterodimer of an alpha and a beta subunit. FAD is required as a cofactor. AMP serves as cofactor.

The electron transfer flavoprotein serves as a specific electron acceptor for other dehydrogenases. It transfers the electrons to the main respiratory chain via ETF-ubiquinone oxidoreductase (ETF dehydrogenase). The sequence is that of Electron transfer flavoprotein subunit beta (etfB) from Clostridium acetobutylicum (strain ATCC 824 / DSM 792 / JCM 1419 / IAM 19013 / LMG 5710 / NBRC 13948 / NRRL B-527 / VKM B-1787 / 2291 / W).